A 384-amino-acid polypeptide reads, in one-letter code: Probable tRNA sulfurtransferase (384 aa).

A THUMP domain is found at glutamate 57–isoleucine 160. Residues methionine 177–leucine 178, tyrosine 202–phenylalanine 203, arginine 259, glycine 281, and glutamine 290 each bind ATP.

This sequence belongs to the ThiI family.

It localises to the cytoplasm. It catalyses the reaction [ThiI sulfur-carrier protein]-S-sulfanyl-L-cysteine + a uridine in tRNA + 2 reduced [2Fe-2S]-[ferredoxin] + ATP + H(+) = [ThiI sulfur-carrier protein]-L-cysteine + a 4-thiouridine in tRNA + 2 oxidized [2Fe-2S]-[ferredoxin] + AMP + diphosphate. The enzyme catalyses [ThiS sulfur-carrier protein]-C-terminal Gly-Gly-AMP + S-sulfanyl-L-cysteinyl-[cysteine desulfurase] + AH2 = [ThiS sulfur-carrier protein]-C-terminal-Gly-aminoethanethioate + L-cysteinyl-[cysteine desulfurase] + A + AMP + 2 H(+). It functions in the pathway cofactor biosynthesis; thiamine diphosphate biosynthesis. In terms of biological role, catalyzes the ATP-dependent transfer of a sulfur to tRNA to produce 4-thiouridine in position 8 of tRNAs, which functions as a near-UV photosensor. Also catalyzes the transfer of sulfur to the sulfur carrier protein ThiS, forming ThiS-thiocarboxylate. This is a step in the synthesis of thiazole, in the thiamine biosynthesis pathway. The sulfur is donated as persulfide by IscS. The sequence is that of Probable tRNA sulfurtransferase from Clostridium acetobutylicum (strain ATCC 824 / DSM 792 / JCM 1419 / IAM 19013 / LMG 5710 / NBRC 13948 / NRRL B-527 / VKM B-1787 / 2291 / W).